A 430-amino-acid chain; its full sequence is Enolase (430 aa).

Gln167 contributes to the (2R)-2-phosphoglycerate binding site. Glu209 (proton donor) is an active-site residue. Residues Asp246, Glu287, and Asp314 each contribute to the Mg(2+) site. (2R)-2-phosphoglycerate is bound by residues Lys339, Arg368, Ser369, and Lys390. The Proton acceptor role is filled by Lys339.

Belongs to the enolase family. Requires Mg(2+) as cofactor.

It localises to the cytoplasm. Its subcellular location is the secreted. The protein resides in the cell surface. It catalyses the reaction (2R)-2-phosphoglycerate = phosphoenolpyruvate + H2O. It participates in carbohydrate degradation; glycolysis; pyruvate from D-glyceraldehyde 3-phosphate: step 4/5. Functionally, catalyzes the reversible conversion of 2-phosphoglycerate (2-PG) into phosphoenolpyruvate (PEP). It is essential for the degradation of carbohydrates via glycolysis. In Prochlorococcus marinus subsp. pastoris (strain CCMP1986 / NIES-2087 / MED4), this protein is Enolase.